Here is a 204-residue protein sequence, read N- to C-terminus: Glycerol-3-phosphate acyltransferase (204 aa).

The next 5 helical transmembrane spans lie at 12-32 (LVMG…HWLA), 85-105 (WQVA…WLGW), 117-137 (MLLG…LTVL), 142-162 (IVSL…ILRF), and 163-183 (QGNS…MVVW).

Belongs to the PlsY family. Probably interacts with PlsX.

The protein resides in the cell inner membrane. The catalysed reaction is an acyl phosphate + sn-glycerol 3-phosphate = a 1-acyl-sn-glycero-3-phosphate + phosphate. It functions in the pathway lipid metabolism; phospholipid metabolism. Its function is as follows. Catalyzes the transfer of an acyl group from acyl-phosphate (acyl-PO(4)) to glycerol-3-phosphate (G3P) to form lysophosphatidic acid (LPA). This enzyme utilizes acyl-phosphate as fatty acyl donor, but not acyl-CoA or acyl-ACP. The polypeptide is Glycerol-3-phosphate acyltransferase (Prochlorococcus marinus (strain MIT 9313)).